The chain runs to 876 residues: Leucine--tRNA ligase (876 aa).

The short motif at 43–53 (PYPSGRIHMGH) is the 'HIGH' region element. The short motif at 632–636 (KMSKS) is the 'KMSKS' region element. Lys-635 is an ATP binding site.

Belongs to the class-I aminoacyl-tRNA synthetase family.

It localises to the cytoplasm. It catalyses the reaction tRNA(Leu) + L-leucine + ATP = L-leucyl-tRNA(Leu) + AMP + diphosphate. The protein is Leucine--tRNA ligase of Sinorhizobium medicae (strain WSM419) (Ensifer medicae).